The following is a 23-amino-acid chain: GIGKFLHSAGKFGKAFLGEVMKS.

In terms of tissue distribution, expressed by the skin glands.

Its subcellular location is the secreted. In terms of biological role, has antimicrobial activity against Gram-negative bacterium E.coli ATCC 25922 (MIC=50 uM) and against fungus C.albicans ATCC 90028 (MIC=100 uM). Has no hemolytic activity against human erythrocytes even at high concentrations. The chain is Magainin-B2 from Xenopus borealis (Kenyan clawed frog).